A 256-amino-acid chain; its full sequence is MAVGKNKRLSKGKKGIKKKVVDPFSRKDWYDIKAPSIFEVRNVGKTLANRSQGLKNANDSLKGRIIEVSLADLNKDEEQSFRKIKLRIDEIQGKNCLTNFHGMDFTSDKLRSLVRKWQTLVEAHVDVKTTDGYLLRLFAIGFTKRRPSQVRKTTYAQSSQVREIRKKMFEIMTREATNCDLKELVQKFVPEAIGREIEKAARSIYPLQNVYVRKAKILKSPKFDMSKLLELHGDSTDETGTRIAKDFKEPEILESV.

N-acetylalanine; partial is present on Ala2.

It belongs to the eukaryotic ribosomal protein eS1 family. In terms of assembly, component of the small ribosomal subunit. Mature ribosomes consist of a small (40S) and a large (60S) subunit. The 40S subunit contains about 33 different proteins and 1 molecule of RNA (18S). The 60S subunit contains about 49 different proteins and 3 molecules of RNA (25S, 5.8S and 5S).

It localises to the cytoplasm. In Laccaria bicolor (strain S238N-H82 / ATCC MYA-4686) (Bicoloured deceiver), this protein is Small ribosomal subunit protein eS1.